The sequence spans 591 residues: Probable auxin efflux carrier component 3b (591 aa).

Residues 1–6 (MISWHE) are Extracellular-facing. Residues 7 to 27 (LYMVLSAVVPLYVAMMVAYGS) form a helical membrane-spanning segment. At 28–38 (VRWWGVLTPEQ) the chain is on the cytoplasmic side. The chain crosses the membrane as a helical span at residues 39 to 59 (CSGINRFVAVIAVPLLSFHFI). (indol-3-yl)acetate is bound at residue Val-51. Topologically, residues 60–70 (SSSDPYAMNLR) are extracellular. A helical membrane pass occupies residues 71-93 (FVAADTLQKVLVLAALAAWSRFP). Topologically, residues 94-107 (ARFVPPAWPPLDCS) are cytoplasmic. A helical membrane pass occupies residues 108-128 (ITLFSVSTLPNTLVMGIPLLV). Asn-118 and Leu-120 together coordinate (indol-3-yl)acetate. The Extracellular portion of the chain corresponds to 129–137 (SMYGPYSGD). A helical transmembrane segment spans residues 138–158 (LMVQIVVLQSIVWYTLLLFLF). Tyr-151 is a (indol-3-yl)acetate binding site. The Cytoplasmic portion of the chain corresponds to 159-450 (EFRAARVLIA…LIRNPNTYAS (292 aa)). Polar residues-rich tracts occupy residues 243 to 254 (SRNATPRGSTFT) and 283 to 292 (SSSRQHTPRP). Disordered regions lie at residues 243–269 (SRNA…SALR), 283–313 (SSSR…APTN), 344–374 (ETRR…GERA), and 392–420 (AGAK…RARG). The span at 395-407 (KTEQQTTAVTTTT) shows a compositional bias: low complexity. Residues 451–471 (LIGLTWSLIAFRFHITMPIIV) traverse the membrane as a helical segment. The Extracellular segment spans residues 472–474 (AKS). A helical transmembrane segment spans residues 475–495 (ISILSDAGLGMAMFSLGLFMA). Over 496–511 (TQPKIIACGYSVAAAS) the chain is Cytoplasmic. A helical transmembrane segment spans residues 512 to 532 (MGVRFFFGPAIMAAASAAVGI). The Extracellular portion of the chain corresponds to 533–535 (RGT). The chain crosses the membrane as a helical span at residues 536 to 556 (LLRIAIVQAALPQGIVPFVFA). Residues Ile-550 and Val-551 each contribute to the (indol-3-yl)acetate site. Over 557 to 568 (KEYNLHATILCT) the chain is Cytoplasmic. A helical transmembrane segment spans residues 569–589 (LVIFGMLIALPITLVYYIILG). At 590–591 (LL) the chain is on the extracellular side.

It belongs to the auxin efflux carrier (TC 2.A.69.1) family. As to quaternary structure, homodimer. As to expression, expressed in stem bases and leaves.

The protein resides in the membrane. In terms of biological role, may act as a component of the auxin efflux carrier. This chain is Probable auxin efflux carrier component 3b, found in Oryza sativa subsp. japonica (Rice).